An 897-amino-acid chain; its full sequence is Protein SAP1 (897 aa).

Disordered regions lie at residues 112 to 144, 195 to 219, 302 to 398, 413 to 438, and 456 to 561; these read EEPA…PVFQ, PSKP…PPLK, QMSD…TKST, SKSN…PNSV, and KKVA…REEP. A compositionally biased stretch (polar residues) spans 120–137; that stretch reads MPSSKTYTNHSSSFTRST. Residues 209 to 219 are compositionally biased toward basic and acidic residues; sequence NPIEHNDPPLK. Over residues 307-321 the composition is skewed to low complexity; sequence SVTSSTSSNKSVSSS. The segment covering 364–380 has biased composition (polar residues); that stretch reads LETSTTMDSSKIRNPQI. A compositionally biased stretch (basic residues) spans 468 to 478; it reads KKSHPILKSKT. Residues 480 to 496 show a composition bias toward low complexity; it reads KVPNSSSKKTSSHPSRP. Residues 497-523 show a composition bias toward polar residues; the sequence is VSNSKPYSHGASQNKKPSKNQTTSMSK. Serine 536 carries the phosphoserine modification. Residue 645 to 652 coordinates ATP; it reads GPPGTGKT.

Belongs to the AAA ATPase family. Interacts with SPT2/SIN1.

The polypeptide is Protein SAP1 (SAP1) (Saccharomyces cerevisiae (strain ATCC 204508 / S288c) (Baker's yeast)).